We begin with the raw amino-acid sequence, 379 residues long: Intracellular hyaluronan-binding protein 4.S (379 aa).

Disordered regions lie at residues 52–260 (THRK…FSQE) and 332–379 (SLAR…PALA). Residues 71 to 81 (GKKESQKDRKA) show a composition bias toward basic and acidic residues. Polar residues predominate over residues 107-116 (KVTQNENVDS). Basic and acidic residues-rich tracts occupy residues 118–133 (VKVD…REVR) and 139–158 (RSAE…DKQM). The segment covering 162-174 (GGRGGMRGRGRGG) has biased composition (gly residues). The span at 179 to 208 (TESDNLRGKREFDRHSGSDRARMRPEDKRG) shows a compositional bias: basic and acidic residues. Composition is skewed to acidic residues over residues 232 to 241 (EQVETTETEA) and 368 to 379 (NPDDPEDFPALA).

This sequence belongs to the SERBP1-HABP4 family. As to quaternary structure, associates with ribosomes; promoting ribosome stabilization. Interacts with eef2/eEF2; promoting ribosome stabilization.

The protein resides in the nucleus. Its subcellular location is the cytoplasm. It is found in the stress granule. The protein localises to the nucleolus. It localises to the nucleus speckle. The protein resides in the cajal body. Ribosome-binding protein that promotes ribosome hibernation, a process during which ribosomes are stabilized in an inactive state and preserved from proteasomal degradation. Acts via its association with eef2/eEF2 factor at the A-site of the ribosome, promoting ribosome stabilization in an inactive state compatible with storage. Plays a key role in ribosome hibernation in the mature egg by promoting ribosome stabilization. Ribosomes, which are produced in large quantities during oogenesis, are stored and translationally repressed in the egg and early embryo. This chain is Intracellular hyaluronan-binding protein 4.S, found in Xenopus laevis (African clawed frog).